A 247-amino-acid chain; its full sequence is tRNA (guanine-N(1)-)-methyltransferase (247 aa).

Residues glycine 116 and isoleucine 135–leucine 140 each bind S-adenosyl-L-methionine.

This sequence belongs to the RNA methyltransferase TrmD family. As to quaternary structure, homodimer.

It localises to the cytoplasm. It carries out the reaction guanosine(37) in tRNA + S-adenosyl-L-methionine = N(1)-methylguanosine(37) in tRNA + S-adenosyl-L-homocysteine + H(+). In terms of biological role, specifically methylates guanosine-37 in various tRNAs. The protein is tRNA (guanine-N(1)-)-methyltransferase of Symbiobacterium thermophilum (strain DSM 24528 / JCM 14929 / IAM 14863 / T).